A 302-amino-acid polypeptide reads, in one-letter code: Glycine--tRNA ligase alpha subunit (302 aa).

This sequence belongs to the class-II aminoacyl-tRNA synthetase family. In terms of assembly, tetramer of two alpha and two beta subunits.

It is found in the cytoplasm. The catalysed reaction is tRNA(Gly) + glycine + ATP = glycyl-tRNA(Gly) + AMP + diphosphate. The chain is Glycine--tRNA ligase alpha subunit from Xanthomonas axonopodis pv. citri (strain 306).